Here is a 1219-residue protein sequence, read N- to C-terminus: NHS-like protein 2 (1219 aa).

Disordered stretches follow at residues 162–181 (FRSS…QSAK), 288–321 (FSNF…HSAP), 336–364 (FPSL…SDHP), 400–423 (TPSA…GNSW), 474–591 (GLLA…ELVL), 669–741 (QGSS…SASV), 854–938 (GAEE…STAS), 979–1003 (IGLQ…KKPS), 1033–1087 (LEED…DKTA), and 1121–1197 (WKET…KTTN). Over residues 288–312 (FSNFSQRDQGHSSSPTGSLARSATS) the composition is skewed to polar residues. Residues 352 to 364 (GDAHQARSASDHP) show a composition bias toward basic and acidic residues. A Phosphoserine modification is found at serine 499. Positions 526–545 (ASTSSEGSNSTDNIAALSTE) are enriched in polar residues. Over residues 549–567 (RHRRQRSKSISLKKAKKKP) the composition is skewed to basic residues. At serine 575 the chain carries Phosphoserine. Positions 674-687 (SLASPSTSRATTPS) are enriched in low complexity. The residue at position 690 (serine 690) is a Phosphoserine. Composition is skewed to polar residues over residues 708–729 (MSPS…SMSL) and 897–908 (TSPTMAMASRSS). Phosphoserine is present on serine 1048. Over residues 1076–1087 (AEEKSLISDKTA) the composition is skewed to basic and acidic residues. Polar residues predominate over residues 1131–1144 (SKPSSHSPVKNTAD). The span at 1145–1160 (SPTGEAAAAPGPSSSA) shows a compositional bias: low complexity. Residue serine 1208 is modified to Phosphoserine.

Belongs to the NHS family.

The polypeptide is NHS-like protein 2 (Mus musculus (Mouse)).